A 245-amino-acid polypeptide reads, in one-letter code: 1-(5-phosphoribosyl)-5-[(5-phosphoribosylamino)methylideneamino] imidazole-4-carboxamide isomerase (245 aa).

Aspartate 8 serves as the catalytic Proton acceptor. Aspartate 129 acts as the Proton donor in catalysis.

It belongs to the HisA/HisF family.

It is found in the cytoplasm. The enzyme catalyses 1-(5-phospho-beta-D-ribosyl)-5-[(5-phospho-beta-D-ribosylamino)methylideneamino]imidazole-4-carboxamide = 5-[(5-phospho-1-deoxy-D-ribulos-1-ylimino)methylamino]-1-(5-phospho-beta-D-ribosyl)imidazole-4-carboxamide. The protein operates within amino-acid biosynthesis; L-histidine biosynthesis; L-histidine from 5-phospho-alpha-D-ribose 1-diphosphate: step 4/9. This Sinorhizobium fredii (strain NBRC 101917 / NGR234) protein is 1-(5-phosphoribosyl)-5-[(5-phosphoribosylamino)methylideneamino] imidazole-4-carboxamide isomerase.